The primary structure comprises 94 residues: MLKPLGDRVVLKIEEKEQTVGGFVLAGSAQEKTKTAQVVATGQGVRTLNGDLVAPSVKPGDRVLVEAHAGIDVKDGDEKYIIVGEANILAIIEE.

It belongs to the GroES chaperonin family. As to quaternary structure, heptamer of 7 subunits arranged in a ring. Interacts with the chaperonin GroEL.

It is found in the cytoplasm. In terms of biological role, together with the chaperonin GroEL, plays an essential role in assisting protein folding. The GroEL-GroES system forms a nano-cage that allows encapsulation of the non-native substrate proteins and provides a physical environment optimized to promote and accelerate protein folding. GroES binds to the apical surface of the GroEL ring, thereby capping the opening of the GroEL channel. This Streptococcus oralis protein is Co-chaperonin GroES.